Reading from the N-terminus, the 169-residue chain is MSEVEYRCFVGGLAWATNDEDLQRTFSQFGDVIDSKIINDRESGRSRGFGFVTFKDEKAMRDAIEEMNGKELDGRVITVNEAQSRGSGGGGGGRGGSGGGYRSGGGGGYSGGGGGGYSGGGGGGYERRSGGYGSGGGGGGRGYGGGGRREGGGYGGGDGGSYGGGGGGW.

Residues 6–84 (YRCFVGGLAW…RVITVNEAQS (79 aa)) form the RRM domain. An ADP-ribosylarginine; by HopU1 modification is found at Arg47. Residues 80 to 99 (NEAQSRGSGGGGGGRGGSGG) form a disordered region. Gly residues predominate over residues 86–99 (GSGGGGGGRGGSGG). The tract at residues 86-168 (GSGGGGGGRG…GGSYGGGGGG (83 aa)) is glycine-rich (GR) required for cell-to-cell movement. Positions 95-143 (GGSGGGYRSGGGGGYSGGGGGGYSGGGGGGYERRSGGYGSGGGGGGRGY) are nuclear targeting sequence (M9). Ser103 is modified (phosphoserine). The disordered stretch occupies residues 130–169 (GGYGSGGGGGGRGYGGGGRREGGGYGGGDGGSYGGGGGGW).

Belongs to the GR-RBP family. As to quaternary structure, interacts with TRN1. Binds to small phloem-mobile single-stranded RNAs (ss-sRNA, e.g. small interfering RNA (siRNA) and microRNA (miRNA)) in the phloeme exudate, including viral-derived sRNA (vsiRNA). ADP-ribosylated by the Pseudomonas syringae type III effector HopU1. ADP-ribosylation reduces the ability of the protein to bind RNA. In terms of tissue distribution, ubiquitous.

It is found in the cytoplasm. Its subcellular location is the nucleus. The protein localises to the secreted. Plays a role in RNA transcription or processing during stress. Binds RNAs and DNAs sequence with a preference to single-stranded nucleic acids. Involved in mRNA alternative splicing of numerous targets by modulating splice site selection. Negatively regulates the circadian oscillations of its own transcript as well as RBG7 transcript. Forms an interlocked post-transcriptional negative feedback loop with the RBG7 autoregulatory circuit. Both proteins negatively autoregulate and reciprocally crossregulate by binding to their pre-mRNAs and promoting unproductive splicing coupled to degradation via the NMD pathway. Target of the Pseudomonas syringae type III effector HopU1. Mediates cell-to-cell trafficking of RNA interference (RNAi) signals (small RNAs (sRNA), e.g. small interfering RNA (siRNA) and microRNA (miRNA)) which regulate growth and development, as well as responses to environmental inputs, including pathogen attack; can compromise zucchini yellow mosaic virus (ZYMV) and tobacco rattle virus (TRV) infections at the early stage. The polypeptide is Glycine-rich RNA-binding protein 8 (Arabidopsis thaliana (Mouse-ear cress)).